The chain runs to 147 residues: MTNSKKSSNNSLKNHELYAIAETSGQQFWFEVNRYYDIDRLKAKEKDKITLDKVLLLKDKDSITVGKPYVKDAKIELEVVSHKRDKKILVYKMRPKKKTRRKMGHRQELTRVMVKSIKVGKPTPKSSSKKEETVKKETKPKSEKSTN.

The interval 115–147 (KSIKVGKPTPKSSSKKEETVKKETKPKSEKSTN) is disordered. A compositionally biased stretch (basic and acidic residues) spans 128–147 (SKKEETVKKETKPKSEKSTN).

The protein belongs to the bacterial ribosomal protein bL21 family. In terms of assembly, part of the 50S ribosomal subunit. Contacts protein L20.

This protein binds to 23S rRNA in the presence of protein L20. This Prochlorococcus marinus (strain MIT 9215) protein is Large ribosomal subunit protein bL21.